A 110-amino-acid chain; its full sequence is Nucleoid-associated protein Sfum_2790 (110 aa).

Belongs to the YbaB/EbfC family. In terms of assembly, homodimer.

The protein localises to the cytoplasm. Its subcellular location is the nucleoid. In terms of biological role, binds to DNA and alters its conformation. May be involved in regulation of gene expression, nucleoid organization and DNA protection. In Syntrophobacter fumaroxidans (strain DSM 10017 / MPOB), this protein is Nucleoid-associated protein Sfum_2790.